Here is a 620-residue protein sequence, read N- to C-terminus: UPF0313 protein BT_0254 (620 aa).

The region spanning 311–591 (AYDMIKFSVN…AQRQFFFWYK (281 aa)) is the Radical SAM core domain. Residues C325, C329, and C332 each coordinate [4Fe-4S] cluster.

The protein belongs to the UPF0313 family. Requires [4Fe-4S] cluster as cofactor.

This is UPF0313 protein BT_0254 from Bacteroides thetaiotaomicron (strain ATCC 29148 / DSM 2079 / JCM 5827 / CCUG 10774 / NCTC 10582 / VPI-5482 / E50).